The chain runs to 155 residues: MSAVLTAEQALKLVGEMFVYHMPFNRALGLELERYEKAFAQLAFNNQPMMVGNWAQSILHGGVIASALDVAAGLVCVGSTLTRHETISEDELRQRLSRMGTIDLRVDYLRPGRGNRFTATSSLLRAGNKVAVARVELHNEDQLYIASATATYMVG.

The protein belongs to the YigI thioesterase family.

It is found in the cytoplasm. The enzyme catalyses a fatty acyl-CoA + H2O = a fatty acid + CoA + H(+). It catalyses the reaction a medium-chain fatty acyl-CoA + H2O = a medium-chain fatty acid + CoA + H(+). It carries out the reaction a long-chain fatty acyl-CoA + H2O = a long-chain fatty acid + CoA + H(+). Functionally, displays thioesterase activity against medium- to long-chain acyl-CoA substrates. Is involved in the thioesterase-dependent beta-oxidation pathway of (9Z,11E)-octadecadienoate (conjugated linoleic acid or CLA), along with TesB and FadM. In Salmonella typhimurium (strain LT2 / SGSC1412 / ATCC 700720), this protein is Medium/long-chain acyl-CoA thioesterase YigI (yigI).